The following is a 369-amino-acid chain: Chaperone protein DnaJ (369 aa).

Residues 4-69 form the J domain; that stretch reads SYYEILEVEK…KKRALYDRYG (66 aa). A CR-type zinc finger spans residues 130–207; that stretch reads GCKKTIKAQY…CKGKTYILKD (78 aa). Zn(2+) is bound by residues Cys143, Cys146, Cys159, Cys162, Cys181, Cys184, Cys195, and Cys198. CXXCXGXG motif repeat units lie at residues 143–150, 159–166, 181–188, and 195–202; these read CESCDGTG, CKQCNGQG, CGACQGKG, and CQACKGKT.

Belongs to the DnaJ family. Homodimer. Zn(2+) is required as a cofactor.

Its subcellular location is the cytoplasm. Functionally, participates actively in the response to hyperosmotic and heat shock by preventing the aggregation of stress-denatured proteins and by disaggregating proteins, also in an autonomous, DnaK-independent fashion. Unfolded proteins bind initially to DnaJ; upon interaction with the DnaJ-bound protein, DnaK hydrolyzes its bound ATP, resulting in the formation of a stable complex. GrpE releases ADP from DnaK; ATP binding to DnaK triggers the release of the substrate protein, thus completing the reaction cycle. Several rounds of ATP-dependent interactions between DnaJ, DnaK and GrpE are required for fully efficient folding. Also involved, together with DnaK and GrpE, in the DNA replication of plasmids through activation of initiation proteins. The sequence is that of Chaperone protein DnaJ from Helicobacter pylori (strain J99 / ATCC 700824) (Campylobacter pylori J99).